Here is a 77-residue protein sequence, read N- to C-terminus: MAGRKGGRAKRRKVCFFTSNGITRIDYKDVDLLKRFVSERGKILPRRVTGTSAKYQRKLTVAIKRARQMALLPYVGE.

The protein belongs to the bacterial ribosomal protein bS18 family. Part of the 30S ribosomal subunit. Forms a tight heterodimer with protein bS6.

Binds as a heterodimer with protein bS6 to the central domain of the 16S rRNA, where it helps stabilize the platform of the 30S subunit. The polypeptide is Small ribosomal subunit protein bS18 (Bacillus thuringiensis subsp. konkukian (strain 97-27)).